Consider the following 368-residue polypeptide: Protein trichome birefringence-like 43 (368 aa).

The chain crosses the membrane as a helical; Signal-anchor for type II membrane protein span at residues Gly9 to Ile25. Positions Gly117–Ser119 match the GDS motif motif. The short motif at Asp344 to Asn358 is the DCXHWCLPGXXDXWN motif element.

This sequence belongs to the PC-esterase family. TBL subfamily.

It localises to the membrane. In terms of biological role, may act as a bridging protein that binds pectin and other cell wall polysaccharides. Probably involved in maintaining esterification of pectins. May be involved in the specific O-acetylation of cell wall polymers. This is Protein trichome birefringence-like 43 (TBL43) from Arabidopsis thaliana (Mouse-ear cress).